Consider the following 282-residue polypeptide: Ermin (282 aa).

Polar residues-rich tracts occupy residues 1-12 and 21-30; these read MTDTPVTLSGSE and NGQQPSSQTR. Residues 1 to 71 are disordered; that stretch reads MTDTPVTLSG…NSKGNVLPRG (71 aa). Ser-72, Ser-212, Ser-224, Ser-228, and Ser-231 each carry phosphoserine. Basic and acidic residues predominate over residues 212–224; that stretch reads SPLKEESLAREDS. Positions 212 to 246 are disordered; the sequence is SPLKEESLAREDSPLSSPSSQPGTPDEQLVLGKKG. Polar residues predominate over residues 225–234; that stretch reads PLSSPSSQPG. Thr-235 carries the post-translational modification Phosphothreonine. The binds actin stretch occupies residues 263-282; it reads KIRKGNTKQRIDEFESMMHL.

In terms of assembly, binds actin. In terms of tissue distribution, expressed specifically by the oligodendrocytes. Highest expression seen in the spinal cord followed by brainstem, cerebellum, thalamus, and hypothalamus. In the myelin sheath, found mainly in the abaxon and the lateral few terminal loops. Its apposition to the myelinated axon, through the latter, defines an axonal subregion, termed juxtanode, at the Ranvier node-paranode junction.

The protein localises to the cytoplasm. Its subcellular location is the cytoskeleton. Functionally, plays a role in cytoskeletal rearrangements during the late wrapping and/or compaction phases of myelinogenesis as well as in maintenance and stability of myelin sheath in the adult. May play an important role in late-stage oligodendroglia maturation, myelin/Ranvier node formation during CNS development, and in the maintenance and plasticity of related structures in the mature CNS. This is Ermin (Ermn) from Rattus norvegicus (Rat).